A 93-amino-acid polypeptide reads, in one-letter code: Small ribosomal subunit protein uS19 (93 aa).

Belongs to the universal ribosomal protein uS19 family.

Its function is as follows. Protein S19 forms a complex with S13 that binds strongly to the 16S ribosomal RNA. The sequence is that of Small ribosomal subunit protein uS19 from Pediococcus pentosaceus (strain ATCC 25745 / CCUG 21536 / LMG 10740 / 183-1w).